The sequence spans 272 residues: Exosome complex component Rrp42 (272 aa).

It belongs to the RNase PH family. Rrp42 subfamily. As to quaternary structure, component of the archaeal exosome complex. Forms a hexameric ring-like arrangement composed of 3 Rrp41-Rrp42 heterodimers. The hexameric ring associates with a trimer of Rrp4 and/or Csl4 subunits.

It is found in the cytoplasm. In terms of biological role, non-catalytic component of the exosome, which is a complex involved in RNA degradation. Contributes to the structuring of the Rrp41 active site. In Thermococcus onnurineus (strain NA1), this protein is Exosome complex component Rrp42.